The chain runs to 121 residues: Putative iron-sulfur cluster insertion protein ErpA (121 aa).

Residues cysteine 49, cysteine 113, and cysteine 115 each coordinate iron-sulfur cluster.

The protein belongs to the HesB/IscA family. As to quaternary structure, homodimer. Requires iron-sulfur cluster as cofactor.

Its function is as follows. Required for insertion of 4Fe-4S clusters. The chain is Putative iron-sulfur cluster insertion protein ErpA from Polaromonas sp. (strain JS666 / ATCC BAA-500).